Reading from the N-terminus, the 90-residue chain is Probable Fe(2+)-trafficking protein (90 aa).

This sequence belongs to the Fe(2+)-trafficking protein family.

Functionally, could be a mediator in iron transactions between iron acquisition and iron-requiring processes, such as synthesis and/or repair of Fe-S clusters in biosynthetic enzymes. This chain is Probable Fe(2+)-trafficking protein, found in Idiomarina loihiensis (strain ATCC BAA-735 / DSM 15497 / L2-TR).